Here is a 421-residue protein sequence, read N- to C-terminus: Adenosylhomocysteinase (421 aa).

The substrate site is built by Asp128 and Glu153. NAD(+) is bound at residue 154–156; that stretch reads TTT. The substrate site is built by Lys183 and Asp187. Residues Asn188, 217–222, Glu240, 296–298, and Asn343 contribute to the NAD(+) site; these read GYGWCG and AGH.

Belongs to the adenosylhomocysteinase family. It depends on NAD(+) as a cofactor.

The protein localises to the cytoplasm. The enzyme catalyses S-adenosyl-L-homocysteine + H2O = L-homocysteine + adenosine. It functions in the pathway amino-acid biosynthesis; L-homocysteine biosynthesis; L-homocysteine from S-adenosyl-L-homocysteine: step 1/1. Its function is as follows. May play a key role in the regulation of the intracellular concentration of adenosylhomocysteine. The sequence is that of Adenosylhomocysteinase from Thermococcus kodakarensis (strain ATCC BAA-918 / JCM 12380 / KOD1) (Pyrococcus kodakaraensis (strain KOD1)).